The chain runs to 488 residues: Palmitoleoyl-protein carboxylesterase notum1 (488 aa).

The first 20 residues, 1 to 20, serve as a signal peptide directing secretion; the sequence is MAGALCVTLLLLLSTNTVSG. An N-linked (GlcNAc...) asparagine glycan is attached at asparagine 90. Catalysis depends on charge relay system residues serine 226, aspartate 334, and histidine 383.

The protein belongs to the pectinacetylesterase family. Notum subfamily. As to expression, expressed in the egg and through cleavage to gastrulation stages. Enriched in the animal (prospective ectoderm) and dorsal regions in early gastrula. Shows a dynamic expression during embryogenesis, in particular during neural induction and antero-posterior (AP) patterning.

The protein localises to the secreted. It catalyses the reaction [Wnt protein]-O-(9Z)-hexadecenoyl-L-serine + H2O = [Wnt protein]-L-serine + (9Z)-hexadecenoate + H(+). Carboxylesterase that acts as a key negative regulator of the Wnt signaling pathway by specifically mediating depalmitoleoylation of WNT proteins. Serine palmitoleoylation of WNT proteins is required for efficient binding to frizzled receptors. Functions in the prospective ectoderm and is required for neural induction. The protein is Palmitoleoyl-protein carboxylesterase notum1 of Xenopus laevis (African clawed frog).